Here is a 448-residue protein sequence, read N- to C-terminus: Tubulin alpha chain, nucleomorph (448 aa).

8 residues coordinate GTP: glutamine 11, glutamate 71, serine 140, glycine 144, threonine 145, threonine 179, asparagine 206, and asparagine 228. Residue glutamate 71 coordinates Mg(2+). Residue glutamate 254 is part of the active site.

Belongs to the tubulin family. In terms of assembly, dimer of alpha and beta chains. A typical microtubule is a hollow water-filled tube with an outer diameter of 25 nm and an inner diameter of 15 nM. Alpha-beta heterodimers associate head-to-tail to form protofilaments running lengthwise along the microtubule wall with the beta-tubulin subunit facing the microtubule plus end conferring a structural polarity. Microtubules usually have 13 protofilaments but different protofilament numbers can be found in some organisms and specialized cells. Mg(2+) is required as a cofactor.

The catalysed reaction is GTP + H2O = GDP + phosphate + H(+). Functionally, tubulin is the major constituent of microtubules, a cylinder consisting of laterally associated linear protofilaments composed of alpha- and beta-tubulin heterodimers. Microtubules grow by the addition of GTP-tubulin dimers to the microtubule end, where a stabilizing cap forms. Below the cap, tubulin dimers are in GDP-bound state, owing to GTPase activity of alpha-tubulin. This Guillardia theta (Cryptophyte) protein is Tubulin alpha chain, nucleomorph (tubA).